The sequence spans 351 residues: Ca(2+)/H(+) antiporter ChaA (351 aa).

The next 11 membrane-spanning stretches (helical) occupy residues 4–24 (IFFI…LMHW), 25–45 (PSAV…SYMG), 59–79 (IGGL…SLFA), 86–106 (GIVL…VAGL), 130–150 (GLLI…SVGM), 156–176 (LNLS…ALYF), 205–225 (VATI…ENLV), 241–261 (FIGV…SAII), 282–302 (IAMF…TSMP), 303–323 (LVFT…MIAI), and 331–351 (WFEG…FFLL).

It belongs to the Ca(2+):cation antiporter (CaCA) (TC 2.A.19) family. Cation/proton exchanger (CAX) subfamily. Homotrimer.

Its subcellular location is the cell membrane. With respect to regulation, calcium efflux is tightly regulated by intracellular pH. Ca(+)/H(+) antiporter that extrudes calcium in exchange for external protons. Does not transport sodium or potassium. This Bacillus subtilis (strain 168) protein is Ca(2+)/H(+) antiporter ChaA (chaA).